Reading from the N-terminus, the 254-residue chain is D-aminoacyl-tRNA deacylase (254 aa).

It belongs to the DtdA deacylase family. As to quaternary structure, monomer. The cofactor is Zn(2+).

It carries out the reaction a D-aminoacyl-tRNA + H2O = a tRNA + a D-alpha-amino acid + H(+). The enzyme catalyses glycyl-tRNA(Ala) + H2O = tRNA(Ala) + glycine + H(+). Functionally, D-aminoacyl-tRNA deacylase with broad substrate specificity. By recycling D-aminoacyl-tRNA to D-amino acids and free tRNA molecules, this enzyme counteracts the toxicity associated with the formation of D-aminoacyl-tRNA entities in vivo. In Methanococcus vannielii (strain ATCC 35089 / DSM 1224 / JCM 13029 / OCM 148 / SB), this protein is D-aminoacyl-tRNA deacylase.